We begin with the raw amino-acid sequence, 702 residues long: Ribosomal RNA large subunit methyltransferase K/L (702 aa).

The region spanning 43–154 is the THUMP domain; that stretch reads LVYQSLMWSR…KETASIALDL (112 aa).

Belongs to the methyltransferase superfamily. RlmKL family.

Its subcellular location is the cytoplasm. The catalysed reaction is guanosine(2445) in 23S rRNA + S-adenosyl-L-methionine = N(2)-methylguanosine(2445) in 23S rRNA + S-adenosyl-L-homocysteine + H(+). The enzyme catalyses guanosine(2069) in 23S rRNA + S-adenosyl-L-methionine = N(2)-methylguanosine(2069) in 23S rRNA + S-adenosyl-L-homocysteine + H(+). Specifically methylates the guanine in position 2445 (m2G2445) and the guanine in position 2069 (m7G2069) of 23S rRNA. This chain is Ribosomal RNA large subunit methyltransferase K/L, found in Shigella dysenteriae serotype 1 (strain Sd197).